We begin with the raw amino-acid sequence, 264 residues long: Thymidylate synthase (264 aa).

Position 21 (arginine 21) interacts with dUMP. Histidine 51 lines the (6R)-5,10-methylene-5,6,7,8-tetrahydrofolate pocket. 126–127 (RR) contacts dUMP. The Nucleophile role is filled by cysteine 146. Residues 166 to 169 (RSCD), asparagine 177, and 207 to 209 (HLY) contribute to the dUMP site. Residue aspartate 169 participates in (6R)-5,10-methylene-5,6,7,8-tetrahydrofolate binding. Alanine 263 is a binding site for (6R)-5,10-methylene-5,6,7,8-tetrahydrofolate.

This sequence belongs to the thymidylate synthase family. Bacterial-type ThyA subfamily. Homodimer.

Its subcellular location is the cytoplasm. It carries out the reaction dUMP + (6R)-5,10-methylene-5,6,7,8-tetrahydrofolate = 7,8-dihydrofolate + dTMP. The protein operates within pyrimidine metabolism; dTTP biosynthesis. Functionally, catalyzes the reductive methylation of 2'-deoxyuridine-5'-monophosphate (dUMP) to 2'-deoxythymidine-5'-monophosphate (dTMP) while utilizing 5,10-methylenetetrahydrofolate (mTHF) as the methyl donor and reductant in the reaction, yielding dihydrofolate (DHF) as a by-product. This enzymatic reaction provides an intracellular de novo source of dTMP, an essential precursor for DNA biosynthesis. This chain is Thymidylate synthase, found in Citrobacter koseri (strain ATCC BAA-895 / CDC 4225-83 / SGSC4696).